The primary structure comprises 244 residues: Lymphotoxin-beta (244 aa).

The Cytoplasmic portion of the chain corresponds to 1–18 (MGALGLEGRGGRLQGRGS). A helical; Signal-anchor for type II membrane protein transmembrane segment spans residues 19–48 (LLLAVAGATSLVTLLLAVPITVLAVLALVP). At 49–244 (QDQGGLVTET…KTFFGAVMVG (196 aa)) the chain is on the extracellular side. The region spanning 88–243 (PAAHLIGAPL…GKTFFGAVMV (156 aa)) is the THD domain. Asparagine 222 is a glycosylation site (N-linked (GlcNAc...) asparagine).

The protein belongs to the tumor necrosis factor family. As to quaternary structure, heterotrimer of either two LTB and one LTA subunits or (less prevalent) two LTA and one LTB subunits.

It is found in the membrane. Functionally, cytokine that binds to LTBR/TNFRSF3. May play a specific role in immune response regulation. Provides the membrane anchor for the attachment of the heterotrimeric complex to the cell surface. This is Lymphotoxin-beta (LTB) from Pan troglodytes (Chimpanzee).